The primary structure comprises 62 residues: Protein sigN176 (62 aa).

This Dictyostelium discoideum (Social amoeba) protein is Protein sigN176.